Reading from the N-terminus, the 151-residue chain is Nucleoside diphosphate kinase (151 aa).

Positions 10, 58, 86, 92, 103, and 113 each coordinate ATP. Histidine 116 (pros-phosphohistidine intermediate) is an active-site residue.

This sequence belongs to the NDK family. As to quaternary structure, homotetramer. Requires Mg(2+) as cofactor.

It localises to the cytoplasm. It catalyses the reaction dZDP + ATP = dZTP + ADP. The enzyme catalyses a 2'-deoxyribonucleoside 5'-diphosphate + ATP = a 2'-deoxyribonucleoside 5'-triphosphate + ADP. It carries out the reaction a ribonucleoside 5'-diphosphate + ATP = a ribonucleoside 5'-triphosphate + ADP. It functions in the pathway purine metabolism. Functionally, major role in the synthesis of nucleoside triphosphates other than ATP. The ATP gamma phosphate is transferred to the NDP beta phosphate via a ping-pong mechanism, using a phosphorylated active-site intermediate. In terms of biological role, (Microbial infection) Catalyzes the phosphorylation of dZDP to dZTP, when the bacterium is infected by a phage that produces the substrate for the synthesis of dZTP (2- amino-2'-deoxyadenosine 5'-triphosphate), which is then used by the phage as a DNA polymerase substrate. This chain is Nucleoside diphosphate kinase, found in Synechococcus sp. (strain CC9605).